Here is a 453-residue protein sequence, read N- to C-terminus: Divalent metal cation transporter MntH (453 aa).

The next 11 helical transmembrane spans lie at 39–59, 66–86, 114–134, 146–166, 175–195, 217–237, 270–290, 310–330, 362–382, 388–408, and 427–447; these read LAFL…GNWI, AQYG…AMLL, AIMF…AEVI, IPLI…LFIM, AIVG…VYIS, GILY…NLYL, LSIA…LFFG, PALG…ALLA, LITR…FKGN, QLLV…LIPL, and INII…YLII.

The protein belongs to the NRAMP family.

The protein localises to the cell membrane. H(+)-stimulated, divalent metal cation uptake system. The protein is Divalent metal cation transporter MntH of Staphylococcus epidermidis (strain ATCC 12228 / FDA PCI 1200).